The chain runs to 196 residues: Dephospho-CoA kinase (196 aa).

Positions Ala6–Leu196 constitute a DPCK domain. Residue Gly14–Thr19 coordinates ATP.

This sequence belongs to the CoaE family.

It localises to the cytoplasm. It catalyses the reaction 3'-dephospho-CoA + ATP = ADP + CoA + H(+). It participates in cofactor biosynthesis; coenzyme A biosynthesis; CoA from (R)-pantothenate: step 5/5. Its function is as follows. Catalyzes the phosphorylation of the 3'-hydroxyl group of dephosphocoenzyme A to form coenzyme A. The chain is Dephospho-CoA kinase from Helicobacter pylori (strain J99 / ATCC 700824) (Campylobacter pylori J99).